The following is a 124-amino-acid chain: Fluoride-specific ion channel FluC (124 aa).

4 helical membrane passes run 4–24, 35–55, 63–83, and 96–116; these read IFYI…TTLV, YATF…FGYL, PYLK…FSAF, and ILIA…ATWT. Residues glycine 75 and threonine 78 each contribute to the Na(+) site.

It belongs to the fluoride channel Fluc/FEX (TC 1.A.43) family.

The protein resides in the cell inner membrane. It catalyses the reaction fluoride(in) = fluoride(out). With respect to regulation, na(+) is not transported, but it plays an essential structural role and its presence is essential for fluoride channel function. Its function is as follows. Fluoride-specific ion channel. Important for reducing fluoride concentration in the cell, thus reducing its toxicity. This is Fluoride-specific ion channel FluC from Flavobacterium psychrophilum (strain ATCC 49511 / DSM 21280 / CIP 103535 / JIP02/86).